The sequence spans 198 residues: Suppressor of cytokine signaling 2 (198 aa).

The disordered stretch occupies residues 1–29; sequence MTLRCLEPSGNGGEGTRSQWGTAGSAEEP. Residues 1 to 75 form an interaction with AREL1 region; the sequence is MTLRCLEPSG…PEGTFLIRDS (75 aa). Phosphoserine is present on Ser30. One can recognise an SH2 domain in the interval 48 to 156; that stretch reads WYWGSMTVNE…TVHLYLTKPL (109 aa). Ser52 carries the post-translational modification Phosphoserine; by PKC. The SOCS box domain maps to 151–197; it reads YLTKPLYTSAPSLQHLCRLTINKCTGAIWGLPLPTRLKDYLEEYKFQ. Lys173 participates in a covalent cross-link: Glycyl lysine isopeptide (Lys-Gly) (interchain with G-Cter in ubiquitin).

As to quaternary structure, substrate-recognition component of the ECS(SOCS2) complex, composed of SOCS2, CUL5, ELOB, ELOC and RNF7/RBX2. Interacts with IGF1R. Interacts with DCUN1D1. Post-translationally, ubiquitinated; mediated by AREL1 and leading to its subsequent proteasomal degradation. Ubiquitination is dependent on its phosphorylation at Ser-52, by PKC. Ubiquitination is stimulated by LPS. Phosphorylation at Ser-52 by PKC facilitates its ubiquitination and proteasomal degradation. High expression in heart, placenta, lung, kidney and prostate. Predominantly expressed in pulmonary epithelia cells, specifically type II pneumocytes.

It localises to the cytoplasm. It participates in protein modification; protein ubiquitination. With respect to regulation, substrate-binding is prevented by the covalent inhibitor MN551 that cross-links with Cys-111. Also inhibited by a MN551 derivative, MN714, which contains a pivaloyloxymethyl that allows cell permeability. Substrate-recognition component of a cullin-5-RING E3 ubiquitin-protein ligase complex (ECS complex, also named CRL5 complex), which mediates the ubiquitination and subsequent proteasomal degradation of target proteins, such as EPOR and GHR. Specifically recognizes and binds phosphorylated proteins via its SH2 domain, promoting their ubiquitination. The ECS(SOCS2) complex acts as a key regulator of growth hormone receptor (GHR) levels by mediating ubiquitination and degradation of GHR, following GHR phosphorylation by JAK2. The ECS(SOCS2) also catalyzes ubiquitination and degradation of JAK2-phosphorylated EPOR. The polypeptide is Suppressor of cytokine signaling 2 (Homo sapiens (Human)).